The primary structure comprises 281 residues: Radiation response metalloprotease IrrE (281 aa).

His82 is a binding site for Zn(2+). Glu83 is an active-site residue. Positions 86 and 113 each coordinate Zn(2+). The disordered stretch occupies residues 262 to 281; that stretch reads LPAGRSEPDADKPEAPGDQS. The span at 267 to 281 shows a compositional bias: basic and acidic residues; the sequence is SEPDADKPEAPGDQS.

Interacts with DdrOC.

Its activity is regulated as follows. Protease activity is inhibited by EDTA. Functionally, plays a central regulatory role in DNA repair and protection pathways in response to radiation stress. Acts as a site-specific metalloprotease that cleaves and inactivates the repressor proteins DdrOC and DdrOP3, resulting in induced expression of genes required for DNA repair and cell survival after exposure to radiation. This Deinococcus deserti (strain DSM 17065 / CIP 109153 / LMG 22923 / VCD115) protein is Radiation response metalloprotease IrrE.